Consider the following 100-residue polypeptide: Small ribosomal subunit protein uS14 (100 aa).

Belongs to the universal ribosomal protein uS14 family. As to quaternary structure, part of the 30S ribosomal subunit. Contacts proteins S3 and S10.

Its function is as follows. Binds 16S rRNA, required for the assembly of 30S particles and may also be responsible for determining the conformation of the 16S rRNA at the A site. The protein is Small ribosomal subunit protein uS14 of Microcystis aeruginosa (strain NIES-843 / IAM M-2473).